The chain runs to 339 residues: MPNRYYEKDGNLDFLAGRTVAIIGYGSQGHAHALNLRDSGVDVVVGLPAGSKSTAKAEAAGLKVLSPADAAKTANVVMILVPDHIQADLYNNEIAPHMTAGKTLMFAHGFNIHFGQIKPPVDIDVTMVAPKAPGHRVRELYTEGVGVPALVAVHQNATGQALERALAYALALGCLKAGVIDTNFREETESDLFGEQAVLCGGAAELVRAGFQTLVDAGYAPEIAYFECLHELKLIVDLIQEGGLSYMRYSVSDTAEYGDYTRGPRVVNDQTRAEMKKILSEIQSGEFARQWIEENKTGRKNFLAMREKGHNDQIEVVGRELREMMTFLKKKKEVGVPVA.

The KARI N-terminal Rossmann domain maps to 1 to 182; the sequence is MPNRYYEKDG…GCLKAGVIDT (182 aa). Residues 25-28, Ser-51, Ser-53, and 83-86 contribute to the NADP(+) site; these read YGSQ and DHIQ. Residue His-108 is part of the active site. Gly-134 is an NADP(+) binding site. Residues 183 to 328 form the KARI C-terminal knotted domain; it reads NFREETESDL…RELREMMTFL (146 aa). 4 residues coordinate Mg(2+): Asp-191, Glu-195, Glu-227, and Glu-231. Ser-252 serves as a coordination point for substrate.

It belongs to the ketol-acid reductoisomerase family. It depends on Mg(2+) as a cofactor.

The enzyme catalyses (2R)-2,3-dihydroxy-3-methylbutanoate + NADP(+) = (2S)-2-acetolactate + NADPH + H(+). It carries out the reaction (2R,3R)-2,3-dihydroxy-3-methylpentanoate + NADP(+) = (S)-2-ethyl-2-hydroxy-3-oxobutanoate + NADPH + H(+). It functions in the pathway amino-acid biosynthesis; L-isoleucine biosynthesis; L-isoleucine from 2-oxobutanoate: step 2/4. Its pathway is amino-acid biosynthesis; L-valine biosynthesis; L-valine from pyruvate: step 2/4. Functionally, involved in the biosynthesis of branched-chain amino acids (BCAA). Catalyzes an alkyl-migration followed by a ketol-acid reduction of (S)-2-acetolactate (S2AL) to yield (R)-2,3-dihydroxy-isovalerate. In the isomerase reaction, S2AL is rearranged via a Mg-dependent methyl migration to produce 3-hydroxy-3-methyl-2-ketobutyrate (HMKB). In the reductase reaction, this 2-ketoacid undergoes a metal-dependent reduction by NADPH to yield (R)-2,3-dihydroxy-isovalerate. This chain is Ketol-acid reductoisomerase (NADP(+)), found in Solibacter usitatus (strain Ellin6076).